The chain runs to 158 residues: SsrA-binding protein (158 aa).

Over residues 136–151 the composition is skewed to basic and acidic residues; that stretch reads KRADSKSRDWARDKQR. A disordered region spans residues 136-158; sequence KRADSKSRDWARDKQRIMKHSTR.

Belongs to the SmpB family.

It is found in the cytoplasm. Its function is as follows. Required for rescue of stalled ribosomes mediated by trans-translation. Binds to transfer-messenger RNA (tmRNA), required for stable association of tmRNA with ribosomes. tmRNA and SmpB together mimic tRNA shape, replacing the anticodon stem-loop with SmpB. tmRNA is encoded by the ssrA gene; the 2 termini fold to resemble tRNA(Ala) and it encodes a 'tag peptide', a short internal open reading frame. During trans-translation Ala-aminoacylated tmRNA acts like a tRNA, entering the A-site of stalled ribosomes, displacing the stalled mRNA. The ribosome then switches to translate the ORF on the tmRNA; the nascent peptide is terminated with the 'tag peptide' encoded by the tmRNA and targeted for degradation. The ribosome is freed to recommence translation, which seems to be the essential function of trans-translation. The polypeptide is SsrA-binding protein (Photobacterium profundum (strain SS9)).